The primary structure comprises 273 residues: 4-hydroxy-tetrahydrodipicolinate reductase (273 aa).

NAD(+)-binding positions include 8-13 (GCAGNM), Glu-34, 102-104 (GTT), and 128-131 (SPNM). The active-site Proton donor/acceptor is the His-161. Position 162 (His-162) interacts with (S)-2,3,4,5-tetrahydrodipicolinate. Lys-165 acts as the Proton donor in catalysis. (S)-2,3,4,5-tetrahydrodipicolinate is bound at residue 171–172 (GT).

It belongs to the DapB family.

It localises to the cytoplasm. It carries out the reaction (S)-2,3,4,5-tetrahydrodipicolinate + NAD(+) + H2O = (2S,4S)-4-hydroxy-2,3,4,5-tetrahydrodipicolinate + NADH + H(+). It catalyses the reaction (S)-2,3,4,5-tetrahydrodipicolinate + NADP(+) + H2O = (2S,4S)-4-hydroxy-2,3,4,5-tetrahydrodipicolinate + NADPH + H(+). It functions in the pathway amino-acid biosynthesis; L-lysine biosynthesis via DAP pathway; (S)-tetrahydrodipicolinate from L-aspartate: step 4/4. Its function is as follows. Catalyzes the conversion of 4-hydroxy-tetrahydrodipicolinate (HTPA) to tetrahydrodipicolinate. The protein is 4-hydroxy-tetrahydrodipicolinate reductase of Methanosphaera stadtmanae (strain ATCC 43021 / DSM 3091 / JCM 11832 / MCB-3).